The sequence spans 206 residues: FMN-dependent NADH:quinone oxidoreductase (206 aa).

FMN contacts are provided by residues serine 9, 15-17, and 139-142; these read SVS and SRGG.

It belongs to the azoreductase type 1 family. Homodimer. Requires FMN as cofactor.

The enzyme catalyses 2 a quinone + NADH + H(+) = 2 a 1,4-benzosemiquinone + NAD(+). The catalysed reaction is N,N-dimethyl-1,4-phenylenediamine + anthranilate + 2 NAD(+) = 2-(4-dimethylaminophenyl)diazenylbenzoate + 2 NADH + 2 H(+). In terms of biological role, quinone reductase that provides resistance to thiol-specific stress caused by electrophilic quinones. Also exhibits azoreductase activity. Catalyzes the reductive cleavage of the azo bond in aromatic azo compounds to the corresponding amines. This chain is FMN-dependent NADH:quinone oxidoreductase, found in Cupriavidus necator (strain ATCC 17699 / DSM 428 / KCTC 22496 / NCIMB 10442 / H16 / Stanier 337) (Ralstonia eutropha).